The chain runs to 1065 residues: Probable importin-7 homolog (1065 aa).

The Importin N-terminal domain occupies 25–98 (AEAQLQQIKV…KENLIDLLVH (74 aa)). Positions 958–996 (ENGGDLGEDEGDNFDDQNDDDDQDSEEDLFEDEDTPDFE) are disordered. Acidic residues predominate over residues 963 to 996 (LGEDEGDNFDDQNDDDDQDSEEDLFEDEDTPDFE).

Belongs to the importin beta family.

The protein resides in the cytoplasm. Its subcellular location is the nucleus. Its function is as follows. May function in nuclear protein import. This chain is Probable importin-7 homolog, found in Dictyostelium discoideum (Social amoeba).